We begin with the raw amino-acid sequence, 102 residues long: Large ribosomal subunit protein bL21 (102 aa).

The protein belongs to the bacterial ribosomal protein bL21 family. In terms of assembly, part of the 50S ribosomal subunit. Contacts protein L20.

In terms of biological role, this protein binds to 23S rRNA in the presence of protein L20. The protein is Large ribosomal subunit protein bL21 of Nitratidesulfovibrio vulgaris (strain DSM 19637 / Miyazaki F) (Desulfovibrio vulgaris).